We begin with the raw amino-acid sequence, 761 residues long: MDSGGGSLGLHTPDSRMAHTMIMQDFVAGMAGTAHIDGDHIVVSVPEAVLVSDVVTDDGITLDHGLAAEVVHGPDIITETDVVTEGVIVPEAVLEADVAIEEDLEEDDGDHILTSELITETVRVPEQVFVADLVTGPNGHLEHVVQDCVSGVDSPTMVSEEVLVTNSDTETVIQAAGGVPGSTVTIKTEDDDDDDVKSTSEDYLMISLDDVGEKLEHMGNTPLKIGSDGSQEDAKEDGFGSEVIKVYIFKAEAEDDVEIGGTEIVTESEYTSGHSVAGVLDQSRMQREKMVYMAVKDSSQEEDDIRDERRVSRRYEDCQASGNTLDSALESRSSTAAQYLQICDGINTNKVLKQKAKKRRRGETRQWQTAVIIGPDGQPLTVYPCHICTKKFKSRGFLKRHMKNHPDHLMRKKYQCTDCDFTTNKKVSFHNHLESHKLINKVDKTHEFTEYTRRYREASPLSSNKLILRDKEPKMHKCKYCDYETAEQGLLNRHLLAVHSKNFPHVCVECGKGFRHPSELKKHMRTHTGEKPYQCQYCIFRCADQSNLKTHIKSKHGNNLPYKCEHCPQAFGDERELQRHLDLFQGHKTHQCPHCDHKSTNSSDLKRHIISVHTKDFPHKCEVCDKGFHRPSELKKHSDIHKGRKIHQCRHCDFKTSDPFILSGHILSVHTKDQPLKCKRCKRGFRQQNELKKHMKTHTGRKIYQCEYCEYSTTDASGFKRHVISIHTKDYPHRCEFCKKGFRRPSEKNQHIMRHHKEALM.

Glycyl lysine isopeptide (Lys-Gly) (interchain with G-Cter in SUMO2) cross-links involve residues K224, K235, and K296. 5 consecutive C2H2-type zinc fingers follow at residues Y383–H408, Y414–H436, H476–H499, H505–H527, and Y533–H556. The required for transcriptional activation stretch occupies residues R515–M761. A C2H2-type 6; atypical zinc finger spans residues Y562–F584. 3 residues coordinate Zn(2+): C564, C567, and H580. 6 C2H2-type zinc fingers span residues H590–H613, H619–H641, H647–H670, L676–H698, Y704–H727, and H733–H755.

This sequence belongs to the krueppel C2H2-type zinc-finger protein family. As to quaternary structure, interacts with PHF8. In terms of tissue distribution, expressed in neural tissues.

The protein resides in the nucleus. Its function is as follows. Transcription regulator required for brain development. Probably acts as a transcription factor that binds to the promoter of target genes and recruits PHF8 histone demethylase, leading to activated expression of genes involved in neuron development, such as KDM5C. May compete with transcription factor ARX for activation of expression of KDM5C. This chain is Zinc finger protein 711 (ZNF711), found in Homo sapiens (Human).